We begin with the raw amino-acid sequence, 264 residues long: Protein ADMETOS (264 aa).

As to expression, paternally imprinted expression in the endosperm.

Functionally, product of a dosage-sensitive gene that contributes to the maintenance of paternally and maternally imprinted gene expression in the endosperm in order to balance parental contributions. Underlies postzygotic reproductive isolation by promoting triploid seed arrest in a genetic dosage-dependent manner, thus being a component of postzygotic interploidy hybridization barriers. This is Protein ADMETOS from Arabidopsis thaliana (Mouse-ear cress).